The sequence spans 148 residues: Large ribosomal subunit protein bL9 (148 aa).

This sequence belongs to the bacterial ribosomal protein bL9 family.

Its function is as follows. Binds to the 23S rRNA. This is Large ribosomal subunit protein bL9 from Salinispora tropica (strain ATCC BAA-916 / DSM 44818 / JCM 13857 / NBRC 105044 / CNB-440).